The chain runs to 409 residues: Arginine deiminase (409 aa).

The active-site Amidino-cysteine intermediate is cysteine 399.

Belongs to the arginine deiminase family.

The protein resides in the cytoplasm. It carries out the reaction L-arginine + H2O = L-citrulline + NH4(+). It functions in the pathway amino-acid degradation; L-arginine degradation via ADI pathway; carbamoyl phosphate from L-arginine: step 1/2. This is Arginine deiminase from Streptococcus gordonii (strain Challis / ATCC 35105 / BCRC 15272 / CH1 / DL1 / V288).